Here is an 87-residue protein sequence, read N- to C-terminus: Acetolactate synthase isozyme 2 small subunit (87 aa).

The 74-residue stretch at 5–78 (QVNVSARFNP…DVAHVAICQS (74 aa)) folds into the ACT domain.

Tetramer of two large and two small chains. The cofactor is Mg(2+). Thiamine diphosphate is required as a cofactor.

It carries out the reaction 2 pyruvate + H(+) = (2S)-2-acetolactate + CO2. It participates in amino-acid biosynthesis; L-isoleucine biosynthesis; L-isoleucine from 2-oxobutanoate: step 1/4. Its pathway is amino-acid biosynthesis; L-valine biosynthesis; L-valine from pyruvate: step 1/4. The chain is Acetolactate synthase isozyme 2 small subunit (ilvM) from Escherichia coli O6:H1 (strain CFT073 / ATCC 700928 / UPEC).